We begin with the raw amino-acid sequence, 365 residues long: Peptide chain release factor 2 (365 aa).

Glutamine 251 carries the post-translational modification N5-methylglutamine.

The protein belongs to the prokaryotic/mitochondrial release factor family. Post-translationally, methylated by PrmC. Methylation increases the termination efficiency of RF2.

It is found in the cytoplasm. In terms of biological role, peptide chain release factor 2 directs the termination of translation in response to the peptide chain termination codons UGA and UAA. The polypeptide is Peptide chain release factor 2 (Campylobacter jejuni subsp. jejuni serotype O:2 (strain ATCC 700819 / NCTC 11168)).